The following is a 190-amino-acid chain: MPRANEIKKGMVLNYNGKLLLVKDIDIQSPTARGAATLYKMRFSDVRTGLKVEERFKGDDIVDTVTLTRRYVDFSYVDGNEYVFMDKEDYTPYTFTKDQIEEELMFMPEGGMPDMQVLTWDGQLLALELPQTVDLEIIETAPGIKGASASARNKPATLSTGLVIQVPEYLSPGEKIRIHIEERRYMGRAD.

This sequence belongs to the elongation factor P family.

The chain is Elongation factor P-like protein from Escherichia fergusonii (strain ATCC 35469 / DSM 13698 / CCUG 18766 / IAM 14443 / JCM 21226 / LMG 7866 / NBRC 102419 / NCTC 12128 / CDC 0568-73).